We begin with the raw amino-acid sequence, 79 residues long: Conotoxin Leo-O4 (79 aa).

Residues 1-22 (MKLTCMMLVAVLFLTAWTFVTA) form the signal peptide. The propeptide occupies 23–51 (NVSRNGLENLFPEERHEMMNPNAAKLNNR). Intrachain disulfides connect Cys-53–Cys-70, Cys-60–Cys-74, and Cys-69–Cys-78.

The protein belongs to the conotoxin O1 superfamily. As to expression, expressed by the venom duct.

The protein resides in the secreted. The protein is Conotoxin Leo-O4 of Conus leopardus (Leopard cone).